The sequence spans 346 residues: MKASHICSYLLSIAPLVVSHGVHHNRDHGHEANHESKQSFLILKQESIFYSLVCFLQNHLFVLGPRYNAIVAILIIQLMPCLFVLFVPGLRKNDRASLTLSLLVSFSLGTLLGDILLHVIPESLSGVTDVTMVGGAIFLGFISFLTLDKTMRILSGTSNDDGSIHSHSHSHTPQQTAEKKAGFNMSAYLNVISGIAHHITDGIALATSFYSSTQVGIMTSIAVTFHEIPHELGDFAILLSSGFTFPQAIRAQAVTAFGAVVGTSIGCWMNEIGNNSHKATSSSANASELMLPFTAGGLIYIATTSVVPQILHSSAPDSKLREFKKWALQLVFIFVGFAVMALMDEH.

The Extracellular segment spans residues 1–2; sequence MK. Residues 3–23 form a helical membrane-spanning segment; it reads ASHICSYLLSIAPLVVSHGVH. Over 24-69 the chain is Cytoplasmic; the sequence is HNRDHGHEANHESKQSFLILKQESIFYSLVCFLQNHLFVLGPRYNA. A helical membrane pass occupies residues 70-90; sequence IVAILIIQLMPCLFVLFVPGL. Topologically, residues 91–99 are extracellular; that stretch reads RKNDRASLT. A helical membrane pass occupies residues 100–120; the sequence is LSLLVSFSLGTLLGDILLHVI. Over 121 to 126 the chain is Cytoplasmic; it reads PESLSG. The helical transmembrane segment at 127–147 threads the bilayer; the sequence is VTDVTMVGGAIFLGFISFLTL. Residues 148–202 lie on the Extracellular side of the membrane; the sequence is DKTMRILSGTSNDDGSIHSHSHSHTPQQTAEKKAGFNMSAYLNVISGIAHHITDG. N-linked (GlcNAc...) asparagine glycosylation occurs at asparagine 184. The helical transmembrane segment at 203–223 threads the bilayer; the sequence is IALATSFYSSTQVGIMTSIAV. At 224-252 the chain is on the cytoplasmic side; sequence TFHEIPHELGDFAILLSSGFTFPQAIRAQ. The helical transmembrane segment at 253–273 threads the bilayer; the sequence is AVTAFGAVVGTSIGCWMNEIG. 2 N-linked (GlcNAc...) asparagine glycosylation sites follow: asparagine 274 and asparagine 285. Residues 274 to 290 are Extracellular-facing; that stretch reads NNSHKATSSSANASELM. Residues 291–311 form a helical membrane-spanning segment; sequence LPFTAGGLIYIATTSVVPQIL. Over 312–322 the chain is Cytoplasmic; the sequence is HSSAPDSKLRE. A helical membrane pass occupies residues 323–343; that stretch reads FKKWALQLVFIFVGFAVMALM. Residues 344–346 lie on the Extracellular side of the membrane; the sequence is DEH.

It belongs to the ZIP transporter (TC 2.A.5) family. KE4/Catsup subfamily.

The protein resides in the endoplasmic reticulum membrane. Zinc transporter whose role depends on the zinc status of the cells. It helps to balance zinc levels between the cytosol and the secretory pathway. It transports zinc into the secretory pathway in a zinc-adequate environment and in a high zinc medium. In high zinc medium, transport of zinc into the secretory pathway is a way to eliminate zinc from the cytosol. Under low cytosolic zinc conditions, it removes zinc from the secretory pathway and acts as a zinc importer that helps to alleviate ER stress. This chain is Zinc transporter YKE4 (YKE4), found in Saccharomyces cerevisiae (strain ATCC 204508 / S288c) (Baker's yeast).